The sequence spans 417 residues: Serine/threonine-protein kinase SBK1 (417 aa).

The Protein kinase domain maps to 53–318 (YELVRELGKG…VFRFLKHELT (266 aa)). Residues 59–67 (LGKGTYGKV) and K82 each bind ATP. D174 acts as the Proton acceptor in catalysis. The interval 321-405 (LRRRPSHRAR…TDGRTDKSKG (85 aa)) is disordered. Positions 363 to 382 (PSPPSVGPVVPVPVPVPVPV) are enriched in pro residues.

The protein belongs to the protein kinase superfamily. Ser/Thr protein kinase family.

It localises to the cytoplasm. It carries out the reaction L-seryl-[protein] + ATP = O-phospho-L-seryl-[protein] + ADP + H(+). It catalyses the reaction L-threonyl-[protein] + ATP = O-phospho-L-threonyl-[protein] + ADP + H(+). In terms of biological role, may be involved in signal-transduction pathways related to the control of brain development. This Mus musculus (Mouse) protein is Serine/threonine-protein kinase SBK1 (Sbk1).